Here is a 312-residue protein sequence, read N- to C-terminus: Protoheme IX farnesyltransferase (312 aa).

Transmembrane regions (helical) follow at residues 34–54 (LVIF…HPVL), 56–76 (ITSL…NMAL), 119–139 (ILVN…YVVI), 152–172 (IVIG…AATG), 179–199 (LLLF…LALF), 225–245 (ILLY…LGYF), 248–268 (VYGV…IEVF), and 283–303 (LFAF…LEAV).

The protein belongs to the UbiA prenyltransferase family. Protoheme IX farnesyltransferase subfamily.

The protein localises to the cell inner membrane. The catalysed reaction is heme b + (2E,6E)-farnesyl diphosphate + H2O = Fe(II)-heme o + diphosphate. Its pathway is porphyrin-containing compound metabolism; heme O biosynthesis; heme O from protoheme: step 1/1. In terms of biological role, converts heme B (protoheme IX) to heme O by substitution of the vinyl group on carbon 2 of heme B porphyrin ring with a hydroxyethyl farnesyl side group. The chain is Protoheme IX farnesyltransferase from Bradyrhizobium sp. (strain BTAi1 / ATCC BAA-1182).